A 185-amino-acid chain; its full sequence is NADH-quinone oxidoreductase subunit B (185 aa).

4 residues coordinate [4Fe-4S] cluster: cysteine 38, cysteine 39, cysteine 104, and cysteine 133.

It belongs to the complex I 20 kDa subunit family. NDH-1 is composed of 14 different subunits. Subunits NuoB, C, D, E, F, and G constitute the peripheral sector of the complex. The cofactor is [4Fe-4S] cluster.

The protein localises to the cell membrane. The enzyme catalyses a quinone + NADH + 5 H(+)(in) = a quinol + NAD(+) + 4 H(+)(out). Its function is as follows. NDH-1 shuttles electrons from NADH, via FMN and iron-sulfur (Fe-S) centers, to quinones in the respiratory chain. The immediate electron acceptor for the enzyme in this species is believed to be a menaquinone. Couples the redox reaction to proton translocation (for every two electrons transferred, four hydrogen ions are translocated across the cytoplasmic membrane), and thus conserves the redox energy in a proton gradient. The chain is NADH-quinone oxidoreductase subunit B from Cutibacterium acnes (strain DSM 16379 / KPA171202) (Propionibacterium acnes).